A 223-amino-acid chain; its full sequence is Methanol utilization control regulatory protein MoxX (223 aa).

The 118-residue stretch at 16-133 (QILIVDDHPV…EICAAFTEVA (118 aa)) folds into the Response regulatory domain. Residues 155–220 (PGTSAPRLTG…DLVVKGIRYF (66 aa)) enclose the HTH luxR-type domain. Positions 179–198 (YRDIADRACISYKTVSNVSL) form a DNA-binding region, H-T-H motif.

In terms of processing, phosphorylated by MoxY.

Its subcellular location is the cytoplasm. Functionally, member of the two-component regulatory system MoxY/MoxX probably involved in the regulation of the methanol dehydrogenase expression. The polypeptide is Methanol utilization control regulatory protein MoxX (moxX) (Paracoccus denitrificans).